The following is a 50-amino-acid chain: Sperm protamine P1 (50 aa).

It belongs to the protamine P1 family. In terms of assembly, cross-linked by interchain disulfide bonds around the DNA-helix. As to expression, testis.

Its subcellular location is the nucleus. The protein localises to the chromosome. Its function is as follows. Protamines substitute for histones in the chromatin of sperm during the haploid phase of spermatogenesis. They compact sperm DNA into a highly condensed, stable and inactive complex. The protein is Sperm protamine P1 (PRM1) of Saguinus imperator (Emperor tamarin).